A 105-amino-acid polypeptide reads, in one-letter code: Putative regulatory protein COPRO5265_1186 (105 aa).

The interval 76-105 is disordered; that stretch reads RLEEEEEEEERTEPITEQEAELEEESGEDV. The segment covering 78-105 has biased composition (acidic residues); it reads EEEEEEEERTEPITEQEAELEEESGEDV.

The protein belongs to the RemA family.

The chain is Putative regulatory protein COPRO5265_1186 from Coprothermobacter proteolyticus (strain ATCC 35245 / DSM 5265 / OCM 4 / BT).